A 146-amino-acid polypeptide reads, in one-letter code: Ribonuclease H (146 aa).

In terms of domain architecture, RNase H type-1 spans 4 to 145; that stretch reads ELNKVVIYTD…ADILARSQIS (142 aa). Residues Asp13, Glu51, Asp73, and Asp137 each coordinate Mg(2+).

The protein belongs to the RNase H family. As to quaternary structure, monomer. Mg(2+) serves as cofactor.

It localises to the cytoplasm. It catalyses the reaction Endonucleolytic cleavage to 5'-phosphomonoester.. Endonuclease that specifically degrades the RNA of RNA-DNA hybrids. In Ehrlichia canis (strain Jake), this protein is Ribonuclease H.